A 496-amino-acid polypeptide reads, in one-letter code: Probable CtpA-like serine protease (496 aa).

Basic and acidic residues predominate over residues 1-16; sequence MDDKQHTSSSDDERAE. The segment at 1–27 is disordered; the sequence is MDDKQHTSSSDDERAEIATSNQDQETN. A compositionally biased stretch (polar residues) spans 18–27; it reads ATSNQDQETN. Residues 39–59 form a helical membrane-spanning segment; that stretch reads FISILIGTTLITAVITVVAYI. Residues 124–206 enclose the PDZ domain; it reads TKSFNEGVSG…TEVTLTVQRG (83 aa). Catalysis depends on charge relay system residues S329, D340, and K354.

Belongs to the peptidase S41A family.

It is found in the cell membrane. The sequence is that of Probable CtpA-like serine protease from Staphylococcus aureus (strain Mu50 / ATCC 700699).